The sequence spans 287 residues: MSTKGQIIKGKPVADKISEELIKEVDLLVKEGINPKLTIVRVGARSDDLSYERGALKRCQNIGITTEVLELAEDITQEEYIDVLKRVNDDKNVNGILCFRPLPKHLNEEVIKYVIAPEKDVDCFSPINSAKVMEGDKSGFPPCTPTAVVEILKHYNVDLKGSKVTVLGRSMVVGKPVSMLLLSEHATVTICHSKTKNLSGVAAEADVLIAAIGRAKMVDESFVKDGAVVIDVGINVDEEGNLCGDVDTNAVLDKVSMITPVPAGVGSVTTSILAKHVVKACKLQNNK.

NADP(+) contacts are provided by residues 168–170, S193, and I234; that span reads GRS.

This sequence belongs to the tetrahydrofolate dehydrogenase/cyclohydrolase family. Homodimer.

It catalyses the reaction (6R)-5,10-methylene-5,6,7,8-tetrahydrofolate + NADP(+) = (6R)-5,10-methenyltetrahydrofolate + NADPH. The enzyme catalyses (6R)-5,10-methenyltetrahydrofolate + H2O = (6R)-10-formyltetrahydrofolate + H(+). It participates in one-carbon metabolism; tetrahydrofolate interconversion. Functionally, catalyzes the oxidation of 5,10-methylenetetrahydrofolate to 5,10-methenyltetrahydrofolate and then the hydrolysis of 5,10-methenyltetrahydrofolate to 10-formyltetrahydrofolate. This Clostridioides difficile (strain 630) (Peptoclostridium difficile) protein is Bifunctional protein FolD.